The primary structure comprises 288 residues: Bifunctional protein FolD (288 aa).

NADP(+) is bound by residues 163-165 (GRS), Ser-188, and Ile-229.

This sequence belongs to the tetrahydrofolate dehydrogenase/cyclohydrolase family. In terms of assembly, homodimer.

The catalysed reaction is (6R)-5,10-methylene-5,6,7,8-tetrahydrofolate + NADP(+) = (6R)-5,10-methenyltetrahydrofolate + NADPH. It catalyses the reaction (6R)-5,10-methenyltetrahydrofolate + H2O = (6R)-10-formyltetrahydrofolate + H(+). It participates in one-carbon metabolism; tetrahydrofolate interconversion. Its function is as follows. Catalyzes the oxidation of 5,10-methylenetetrahydrofolate to 5,10-methenyltetrahydrofolate and then the hydrolysis of 5,10-methenyltetrahydrofolate to 10-formyltetrahydrofolate. In Campylobacter curvus (strain 525.92), this protein is Bifunctional protein FolD.